The sequence spans 582 residues: ABC transporter-like protein ECU11_1340 (582 aa).

An ABC transporter domain is found at 15–257 (VPNQNLSSNE…LGTKGIHNDG (243 aa)). 47–54 (GTSGSGKT) provides a ligand contact to ATP. An ABC transmembrane type-2 domain is found at 316-519 (YVSFQMAIRQ…EIDAFISNFF (204 aa)). The next 6 helical transmembrane spans lie at 335-355 (ILYS…GKYI), 359-378 (FSIA…YVMN), 412-432 (TLVS…FGLI), 436-456 (HAFL…SMLF), 482-502 (GALL…SVIP), and 551-571 (SFLR…SSIL).

Belongs to the ABC transporter superfamily.

It localises to the membrane. This chain is ABC transporter-like protein ECU11_1340, found in Encephalitozoon cuniculi (strain GB-M1) (Microsporidian parasite).